The primary structure comprises 403 residues: Glycerophosphocholine acyltransferase 1 (403 aa).

The Cytoplasmic segment spans residues 1-112; that stretch reads MDHLEFDENT…SGKVVRFRDK (112 aa). The chain crosses the membrane as a helical span at residues 113–133; it reads LSFALGVSTCILTALLVGMAP. At 134–137 the chain is on the lumenal side; the sequence is ESMH. The chain crosses the membrane as a helical span at residues 138 to 155; sequence LWYTIQLFVYLPLRYYTY. Over 156–161 the chain is Cytoplasmic; sequence QRKGYE. The helical transmembrane segment at 162 to 182 threads the bilayer; that stretch reads YFIADFCYWGNILLLVYIWIF. Topologically, residues 183–186 are lumenal; it reads PESR. The helical transmembrane segment at 187–207 threads the bilayer; the sequence is RLFILSYSISYGTLAWSVVAW. Over 208-218 the chain is Cytoplasmic; it reads RNSLLFHSIDK. The helical transmembrane segment at 219–239 threads the bilayer; that stretch reads ITSLFIHFFPPLVLHTIVHLT. N-linked (GlcNAc...) asparagine glycosylation is present at Asn240. Over 240–262 the chain is Lumenal; the sequence is NKSYLKDRFPAVLKVKKIDLLSS. Residues 263 to 283 form a helical membrane-spanning segment; sequence VEIASFFYALWQIWYYFFIQV. At 284-322 the chain is on the cytoplasmic side; sequence GKQKQIQEGRPTSFTWLSKAYSKTKLGRAVAKLPQNLQP. A helical membrane pass occupies residues 323–343; that stretch reads FVFMIIQYLYSITTMLPCSLW. The Lumenal portion of the chain corresponds to 344–352; sequence YNNKLYSTA. The chain crosses the membrane as a helical span at residues 353–373; that stretch reads FLALIFGWSVWNGASYYIDVF. The Cytoplasmic portion of the chain corresponds to 374-403; the sequence is GRRFQKELEALRQQLAETPTNSGSSSALSR.

Belongs to the GPC1 family.

The protein resides in the endoplasmic reticulum membrane. It is found in the golgi apparatus membrane. It carries out the reaction sn-glycerol 3-phosphocholine + an acyl-CoA = a 1-acyl-sn-glycero-3-phosphocholine + CoA. It catalyses the reaction sn-glycero-3-phosphoethanolamine + an acyl-CoA = a monoacyl-sn-glycero-3-phosphoethanolamine + CoA. The catalysed reaction is sn-glycero-3-phosphoethanolamine + (9Z)-octadecenoyl-CoA = (9Z-octadecenoyl)-sn-glycero-3-phosphoethanolamine + CoA. Glycerophosphocholine acyltransferase (GPCAT) that utilizes acyl-CoA to acylate glycero-3-phosphocholine (GPC), forming lysophosphatidylcholine (LPC). Shows broad acyl specificities with a preference for 16:0-CoA, polyunsaturated acyl-CoA, and the hydroxylated ricinoleoyl-CoA. Also catalyzes the acylation of glycero-3-phosphoethanolamine (GPE) with acyl-CoA. In addition to acyl-CoA, GPCAT efficiently utilizes LPC and lysophosphatidylethanolamine (LPE) as acyl donors in the acylation of GPC. Contributes to the maintenance of phosphatidylcholine (PC) homeostasis and might also have specific functions in acyl editing of PC, such as transferring acyl groups modified at the sn-2 position of PC to the sn-1. The chain is Glycerophosphocholine acyltransferase 1 from Schizosaccharomyces pombe (strain 972 / ATCC 24843) (Fission yeast).